The chain runs to 159 residues: MAKQKKHPSGTIAQNKKALHDYFIEQRFEAGVALAGWEVKSLRAGKAQLVDSYVLLKDGEAWLLGSHITPLTTASTHVIADPVRTRKLLLHKRELGKLFGAVQQKGYACVALSMYWKKHLVKCEIALAKGKKDFDKRHTEKERDSDREIQRAMRHGKDD.

A disordered region spans residues 132-159 (KDFDKRHTEKERDSDREIQRAMRHGKDD).

It belongs to the SmpB family.

It localises to the cytoplasm. Its function is as follows. Required for rescue of stalled ribosomes mediated by trans-translation. Binds to transfer-messenger RNA (tmRNA), required for stable association of tmRNA with ribosomes. tmRNA and SmpB together mimic tRNA shape, replacing the anticodon stem-loop with SmpB. tmRNA is encoded by the ssrA gene; the 2 termini fold to resemble tRNA(Ala) and it encodes a 'tag peptide', a short internal open reading frame. During trans-translation Ala-aminoacylated tmRNA acts like a tRNA, entering the A-site of stalled ribosomes, displacing the stalled mRNA. The ribosome then switches to translate the ORF on the tmRNA; the nascent peptide is terminated with the 'tag peptide' encoded by the tmRNA and targeted for degradation. The ribosome is freed to recommence translation, which seems to be the essential function of trans-translation. The protein is SsrA-binding protein of Pseudomonas aeruginosa (strain LESB58).